A 597-amino-acid chain; its full sequence is Elongation factor 4 (597 aa).

In terms of domain architecture, tr-type G spans 2–184; it reads KHIRNFSIIA…EIVARIPAPV (183 aa). Residues 14 to 19 and 131 to 134 each bind GTP; these read DHGKST and NKID.

This sequence belongs to the TRAFAC class translation factor GTPase superfamily. Classic translation factor GTPase family. LepA subfamily.

The protein resides in the cell inner membrane. The catalysed reaction is GTP + H2O = GDP + phosphate + H(+). Functionally, required for accurate and efficient protein synthesis under certain stress conditions. May act as a fidelity factor of the translation reaction, by catalyzing a one-codon backward translocation of tRNAs on improperly translocated ribosomes. Back-translocation proceeds from a post-translocation (POST) complex to a pre-translocation (PRE) complex, thus giving elongation factor G a second chance to translocate the tRNAs correctly. Binds to ribosomes in a GTP-dependent manner. The sequence is that of Elongation factor 4 from Aeromonas salmonicida (strain A449).